The primary structure comprises 217 residues: Nucleolar protein 12 (217 aa).

Residues Gly34–Gln98 adopt a coiled-coil conformation. The segment at Leu122–Glu217 is disordered. Over residues Gly130–Ser141 the composition is skewed to acidic residues. Composition is skewed to basic residues over residues Ala172 to Arg184 and Lys201 to Glu217.

It belongs to the RRP17 family. As to quaternary structure, interacts with KIAA1191. In terms of tissue distribution, expressed in brain, lung, spleen, kidney and heart.

It localises to the nucleus. Its subcellular location is the nucleolus. It is found in the cytoplasm. In terms of biological role, multifunctional RNA binding protein that plays a role in RNA metabolism and DNA maintenance. Participates in the resolution of DNA stress and the maintenance of genome integrity by localizing to sites of DNA insults. Also plays a role in proper nucleolar organization by limiting nucleolar size and regulating nucleolar number. Mechanistically, regulates the nucleolar levels of fibrillarin and nucleolin, two key players in pre-rRNA processing and ribosome assembly. In Mus musculus (Mouse), this protein is Nucleolar protein 12 (Nol12).